Here is a 204-residue protein sequence, read N- to C-terminus: Salt stress root protein RS1 (204 aa).

The disordered stretch occupies residues 128–204 (FVPKEEPKPE…AAPAAEPEKQ (77 aa)). The segment covering 147–161 (TSREVAVEEEKKEEE) has biased composition (basic and acidic residues). Over residues 164–180 (PAEPAAAAAEAAAPSTE) the composition is skewed to low complexity. The segment covering 182–192 (VEEKKEEEKPA) has biased composition (basic and acidic residues). Residues 193-204 (EAAAPAAEPEKQ) are compositionally biased toward low complexity.

This sequence belongs to the DREPP family.

This chain is Salt stress root protein RS1, found in Oryza sativa subsp. indica (Rice).